The primary structure comprises 181 residues: Interleukin-10 (181 aa).

The signal sequence occupies residues 1–19 (MHGSALLCCCLVLLAGVGA). Intrachain disulfides connect cysteine 31/cysteine 129 and cysteine 81/cysteine 135. An N-linked (GlcNAc...) asparagine glycan is attached at asparagine 137.

The protein belongs to the IL-10 family. In terms of assembly, homodimer. Interacts with IL10RA and IL10RB.

Its subcellular location is the secreted. In terms of biological role, major immune regulatory cytokine that acts on many cells of the immune system where it has profound anti-inflammatory functions, limiting excessive tissue disruption caused by inflammation. Mechanistically, IL10 binds to its heterotetrameric receptor comprising IL10RA and IL10RB leading to JAK1 and STAT2-mediated phosphorylation of STAT3. In turn, STAT3 translocates to the nucleus where it drives expression of anti-inflammatory mediators. Targets antigen-presenting cells (APCs) such as macrophages and monocytes and inhibits their release of pro-inflammatory cytokines including granulocyte-macrophage colony-stimulating factor /GM-CSF, granulocyte colony-stimulating factor/G-CSF, IL-1 alpha, IL-1 beta, IL-6, IL-8 and TNF-alpha. Also interferes with antigen presentation by reducing the expression of MHC-class II and co-stimulatory molecules, thereby inhibiting their ability to induce T cell activation. In addition, controls the inflammatory response of macrophages by reprogramming essential metabolic pathways including mTOR signaling. This chain is Interleukin-10 (IL10), found in Canis lupus familiaris (Dog).